The primary structure comprises 554 residues: Dihydroxy-acid dehydratase (554 aa).

Aspartate 78 lines the Mg(2+) pocket. Cysteine 119 is a [2Fe-2S] cluster binding site. Mg(2+)-binding residues include aspartate 120 and lysine 121. Position 121 is an N6-carboxylysine (lysine 121). A [2Fe-2S] cluster-binding site is contributed by cysteine 191. Glutamate 442 contributes to the Mg(2+) binding site. Catalysis depends on serine 468, which acts as the Proton acceptor.

It belongs to the IlvD/Edd family. Homodimer. It depends on [2Fe-2S] cluster as a cofactor. The cofactor is Mg(2+).

The catalysed reaction is (2R)-2,3-dihydroxy-3-methylbutanoate = 3-methyl-2-oxobutanoate + H2O. It carries out the reaction (2R,3R)-2,3-dihydroxy-3-methylpentanoate = (S)-3-methyl-2-oxopentanoate + H2O. The protein operates within amino-acid biosynthesis; L-isoleucine biosynthesis; L-isoleucine from 2-oxobutanoate: step 3/4. Its pathway is amino-acid biosynthesis; L-valine biosynthesis; L-valine from pyruvate: step 3/4. Functionally, functions in the biosynthesis of branched-chain amino acids. Catalyzes the dehydration of (2R,3R)-2,3-dihydroxy-3-methylpentanoate (2,3-dihydroxy-3-methylvalerate) into 2-oxo-3-methylpentanoate (2-oxo-3-methylvalerate) and of (2R)-2,3-dihydroxy-3-methylbutanoate (2,3-dihydroxyisovalerate) into 2-oxo-3-methylbutanoate (2-oxoisovalerate), the penultimate precursor to L-isoleucine and L-valine, respectively. This is Dihydroxy-acid dehydratase from Thermotoga sp. (strain RQ2).